The sequence spans 520 residues: Bifunctional dihydrofolate reductase-thymidylate synthase (520 aa).

The region spanning 26–229 (AFSIVVALDK…LEFEICKYVP (204 aa)) is the DHFR domain. Val-30 serves as a coordination point for substrate. NADP(+) is bound by residues Ala-32 and 38-44 (GIGDGES). Asp-52 contacts substrate. Residues 81-83 (RKT), 102-105 (LSSK), and 157-164 (GGAQVYAD) each bind NADP(+). Substrate-binding residues include Tyr-162 and Thr-180. The tract at residues 234–520 (ERQYLELIDR…HPPIKMEMAV (287 aa)) is thymidylate synthase. Residue Arg-254 participates in dUMP binding. The active site involves Cys-400. Residues His-401, 421-425 (QRSCD), Asn-433, and 463-465 (HVY) each bind dUMP.

This sequence in the N-terminal section; belongs to the dihydrofolate reductase family. The protein in the C-terminal section; belongs to the thymidylate synthase family.

The catalysed reaction is (6S)-5,6,7,8-tetrahydrofolate + NADP(+) = 7,8-dihydrofolate + NADPH + H(+). The enzyme catalyses dUMP + (6R)-5,10-methylene-5,6,7,8-tetrahydrofolate = 7,8-dihydrofolate + dTMP. Its pathway is cofactor biosynthesis; tetrahydrofolate biosynthesis; 5,6,7,8-tetrahydrofolate from 7,8-dihydrofolate: step 1/1. Bifunctional enzyme. Involved in de novo dTMP biosynthesis. Key enzyme in folate metabolism. Catalyzes an essential reaction for de novo glycine and purine synthesis, DNA precursor synthesis, and for the conversion of dUMP to dTMP. The sequence is that of Bifunctional dihydrofolate reductase-thymidylate synthase from Leishmania amazonensis.